Consider the following 6077-residue polypeptide: Nonribosomal peptide synthetase nlsA (6077 aa).

The tract at residues 417-618 (VFAYAPLIHG…LGRKDSQIKL (202 aa)) is adenylation 1. The region spanning 751-827 (HSEVTVEDRL…DLVTRVQEIK (77 aa)) is the Carrier 1 domain. Ser-788 bears the O-(pantetheine 4'-phosphoryl)serine mark. Condensation regions lie at residues 842–1267 (LSPI…GKRL) and 1309–1737 (EDIY…KQRI). Adenylation stretches follow at residues 1757–2149 (QEKM…YLGE) and 2755–3157 (DRVI…QVKL). In terms of domain architecture, Carrier 2 spans 3297-3373 (AVERAAESTL…DMAKCCDDTE (77 aa)). Residue Ser-3334 is modified to O-(pantetheine 4'-phosphoryl)serine. Residues 3524 to 3779 (DSRYRQCLYK…LLSVPRDSLM (256 aa)) form a condensation 3 region. The tract at residues 3816 to 4213 (ENAIMHPQAT…LGRKDHQVKL (398 aa)) is adenylation 4. In terms of domain architecture, Carrier 3 spans 4361-4437 (REGDATPAII…ELAVSCGTKP (77 aa)). Position 4398 is an O-(pantetheine 4'-phosphoryl)serine (Ser-4398). Condensation stretches follow at residues 4451–4869 (PLSP…RVLE) and 4916–5260 (VEDI…EDKT). In terms of domain architecture, Carrier 4 spans 5334 to 5410 (RAPNDSEKQL…NMMALINDRK (77 aa)). Ser-5371 bears the O-(pantetheine 4'-phosphoryl)serine mark. The condensation 6 stretch occupies residues 5476–5885 (DVLPVTDFQA…SLVANPNVAL (410 aa)). Positions 5921–6004 (SEILVHSDLI…GHMAVLALNM (84 aa)) constitute a Carrier 5 domain. Low complexity predominate over residues 6013–6027 (DSDAAPAPAYAPVDA). Residues 6013–6047 (DSDAAPAPAYAPVDARASRNVSTSRQQQEGLPLPA) form a disordered region. Polar residues predominate over residues 6031-6041 (RNVSTSRQQQE).

This sequence belongs to the NRP synthetase family.

The protein operates within secondary metabolite biosynthesis. Functionally, nonribosomal peptide synthetase involved in the synthesis of nidulanin A and derived compounds. Nidulanin A is a tetracyclopeptide with the sequence L-Phe-L-Kyn-L-Val-D-Val and an isoprene unit N-linked to the amino group of L-kynurenine. The NRPS nlsA is responsible of the synthesis of the cyclopeptide and the prenyltransferase nptA adds the isoprene unit on the L-kynurenine residue of nidulanin A. Further modifications lead to additional oxygenated related compounds. The protein is Nonribosomal peptide synthetase nlsA of Emericella nidulans (strain FGSC A4 / ATCC 38163 / CBS 112.46 / NRRL 194 / M139) (Aspergillus nidulans).